Reading from the N-terminus, the 591-residue chain is 2-succinyl-5-enolpyruvyl-6-hydroxy-3-cyclohexene-1-carboxylate synthase (591 aa).

Belongs to the TPP enzyme family. MenD subfamily. Homodimer. Mg(2+) is required as a cofactor. Requires Mn(2+) as cofactor. The cofactor is thiamine diphosphate.

The enzyme catalyses isochorismate + 2-oxoglutarate + H(+) = 5-enolpyruvoyl-6-hydroxy-2-succinyl-cyclohex-3-ene-1-carboxylate + CO2. It functions in the pathway quinol/quinone metabolism; 1,4-dihydroxy-2-naphthoate biosynthesis; 1,4-dihydroxy-2-naphthoate from chorismate: step 2/7. It participates in quinol/quinone metabolism; menaquinone biosynthesis. Its function is as follows. Catalyzes the thiamine diphosphate-dependent decarboxylation of 2-oxoglutarate and the subsequent addition of the resulting succinic semialdehyde-thiamine pyrophosphate anion to isochorismate to yield 2-succinyl-5-enolpyruvyl-6-hydroxy-3-cyclohexene-1-carboxylate (SEPHCHC). This chain is 2-succinyl-5-enolpyruvyl-6-hydroxy-3-cyclohexene-1-carboxylate synthase, found in Salinibacter ruber (strain DSM 13855 / M31).